A 214-amino-acid chain; its full sequence is Mediator of RNA polymerase II transcription subunit 29 (214 aa).

Positions 1 to 78 (MMNQMGMHMQ…QQQSQQTEKV (78 aa)) are disordered. A compositionally biased stretch (gly residues) spans 15–34 (VPGGPGGPVGMAGGPVGGVG). The segment covering 44-74 (QMQQQQQVAAQQQQQQQQQQQAQAHQQQSQQ) has biased composition (low complexity).

Belongs to the Mediator complex subunit 29 family. Component of the Mediator complex.

It localises to the nucleus. Component of the Mediator complex, a coactivator involved in the regulated transcription of nearly all RNA polymerase II-dependent genes. Mediator functions as a bridge to convey information from gene-specific regulatory proteins to the basal RNA polymerase II transcription machinery. Mediator is recruited to promoters by direct interactions with regulatory proteins and serves as a scaffold for the assembly of a functional preinitiation complex with RNA polymerase II and the general transcription factors. The sequence is that of Mediator of RNA polymerase II transcription subunit 29 (ix) from Aedes aegypti (Yellowfever mosquito).